The chain runs to 1161 residues: DNA-directed RNA polymerase III subunit 2 (1161 aa).

Residues 1104 to 1125 form a C4-type zinc finger; the sequence is CRACGLLGYYNYKLKKAVCTTC.

This sequence belongs to the RNA polymerase beta chain family. As to quaternary structure, component of the RNA polymerase III (Pol III) complex consisting of 17 subunits.

It is found in the nucleus. The enzyme catalyses RNA(n) + a ribonucleoside 5'-triphosphate = RNA(n+1) + diphosphate. In terms of biological role, DNA-dependent RNA polymerase catalyzes the transcription of DNA into RNA using the four ribonucleoside triphosphates as substrates. Second largest core component of RNA polymerase III which synthesizes small RNAs, such as 5S rRNA and tRNAs. Proposed to contribute to the polymerase catalytic activity and forms the polymerase active center together with the largest subunit. Pol III is composed of mobile elements and NRPC2 is part of the core element with the central large cleft and probably a clamp element that moves to open and close the cleft. Its function is as follows. Essential for the completion of the three rounds of mitosis in female megaspores required for the development of mature gametophytes. This chain is DNA-directed RNA polymerase III subunit 2, found in Arabidopsis thaliana (Mouse-ear cress).